We begin with the raw amino-acid sequence, 516 residues long: Probable serine/threonine-protein kinase WNK3 (516 aa).

Residues 22–280 enclose the Protein kinase domain; it reads GRYKEVLGKG…AKELLDDPFL (259 aa). ATP is bound by residues 102-105 and Lys-152; that span reads TEVF. Asp-169 (proton acceptor) is an active-site residue. A disordered region spans residues 426–451; sequence SSPKAGAGDSRSPFAPRSNSKLSSAQ. Over residues 442–451 the composition is skewed to polar residues; that stretch reads RSNSKLSSAQ. Residues 457-490 adopt a coiled-coil conformation; that stretch reads EVGVIVEKLESLLRKQREEIEEMQRDQERIVTEF.

It belongs to the protein kinase superfamily. Ser/Thr protein kinase family. WNK subfamily.

It carries out the reaction L-seryl-[protein] + ATP = O-phospho-L-seryl-[protein] + ADP + H(+). The enzyme catalyses L-threonyl-[protein] + ATP = O-phospho-L-threonyl-[protein] + ADP + H(+). Its function is as follows. May regulate flowering time by modulating the photoperiod pathway. This is Probable serine/threonine-protein kinase WNK3 (WNK3) from Arabidopsis thaliana (Mouse-ear cress).